An 871-amino-acid chain; its full sequence is DNA mismatch repair protein MutS (871 aa).

Residue 630 to 637 (GPNMGGKS) coordinates ATP. The interval 830–849 (KEEPESKSASPVEAALAGIN) is disordered.

The protein belongs to the DNA mismatch repair MutS family.

Functionally, this protein is involved in the repair of mismatches in DNA. It is possible that it carries out the mismatch recognition step. This protein has a weak ATPase activity. This Verminephrobacter eiseniae (strain EF01-2) protein is DNA mismatch repair protein MutS.